Reading from the N-terminus, the 407-residue chain is Inhibin beta B chain (407 aa).

An N-terminal signal peptide occupies residues 1 to 28; it reads MDGLPGRALGAACLLLLAAGWLGPEAWG. The segment at 27–60 is disordered; it reads WGSPTPPPSPAAPPPPPPPGALGGSQDTCTSCGG. The propeptide occupies 29-292; it reads SPTPPPSPAA…VDSRHRIRKR (264 aa). The segment covering 30-46 has biased composition (pro residues); the sequence is PTPPPSPAAPPPPPPPG. Asparagine 93 is a glycosylation site (N-linked (GlcNAc...) asparagine). 4 disulfide bridges follow: cysteine 296-cysteine 304, cysteine 303-cysteine 372, cysteine 332-cysteine 404, and cysteine 336-cysteine 406.

This sequence belongs to the TGF-beta family. As to quaternary structure, dimeric, linked by one or more disulfide bonds. Inhibin B is a dimer of alpha and beta-B. Activin B is a homodimer of beta-B. Activin AB is a dimer of beta-A and beta-B. Interacts with FST and FSTL3.

Its subcellular location is the secreted. Functionally, inhibins and activins inhibit and activate, respectively, the secretion of follitropin by the pituitary gland. Inhibins/activins are involved in regulating a number of diverse functions such as hypothalamic and pituitary hormone secretion, gonadal hormone secretion, germ cell development and maturation, erythroid differentiation, insulin secretion, nerve cell survival, embryonic axial development or bone growth, depending on their subunit composition. Inhibins appear to oppose the functions of activins. In terms of biological role, activin B is a dimer of alpha and beta-B that plays a role in several essential biological processes including embryonic development, stem cell maintenance and differentiation, haematopoiesis, cell proliferation and wound healing. Signals through type I receptor ACVR1C, abundantly expressed in pancreatic beta cells, and type II receptors like ACVR2A. Upon ligand binding, these receptors phosphorylate intracellular signaling mediators SMAD2 and SMAD3, which form a complex with SMAD4, translocate to the nucleus, and regulate gene expression. Plays a crucial role in the induction of hepcidin by inflammation through activation of ACVR1C and subsequent phosphorylation of SMAD1/5/8. Regulates adipocyte lipid metabolism by decreasing non-esterified fatty acids and glycerol release and increases intracellular triglyceride content. Stimulates wound healing by promoting cell migration and hair follicle regeneration through the JNK and ERK signaling pathways downstream of RHOA. Inhibin B is a dimer of alpha and beta-B that plays a crucial role in the regulation of the reproductive system by inhibiting the secretion of follicle-stimulating hormone (FSH) from the anterior pituitary gland. Thereby, maintains reproductive homeostasis in both males and females. Acts as a more potent suppressor of FSH release than inhibin A. Functions as competitive receptor antagonist binding activin type II receptors with high affinity in the presence of the TGF-beta type III coreceptor/TGFBR3L. This Sus scrofa (Pig) protein is Inhibin beta B chain (INHBB).